Here is a 462-residue protein sequence, read N- to C-terminus: Glutamate--tRNA ligase 2 (462 aa).

The short motif at 8-18 (PSPTGYLHIGG) is the 'HIGH' region element. Positions 236–240 (KLSKR) match the 'KMSKS' region motif. Lys239 contacts ATP.

Belongs to the class-I aminoacyl-tRNA synthetase family. Glutamate--tRNA ligase type 1 subfamily. As to quaternary structure, monomer.

It localises to the cytoplasm. It carries out the reaction tRNA(Glu) + L-glutamate + ATP = L-glutamyl-tRNA(Glu) + AMP + diphosphate. Its function is as follows. Catalyzes the attachment of glutamate to tRNA(Glu) in a two-step reaction: glutamate is first activated by ATP to form Glu-AMP and then transferred to the acceptor end of tRNA(Glu). This chain is Glutamate--tRNA ligase 2, found in Nitratiruptor sp. (strain SB155-2).